The primary structure comprises 120 residues: NAD(P)H-quinone oxidoreductase subunit 3 (120 aa).

3 helical membrane-spanning segments follow: residues 2-22 (FVLS…LVPI), 64-84 (MFAL…PWAV), and 89-109 (LGLL…IALV).

This sequence belongs to the complex I subunit 3 family. In terms of assembly, NDH-1 can be composed of about 15 different subunits; different subcomplexes with different compositions have been identified which probably have different functions.

It is found in the cellular thylakoid membrane. The enzyme catalyses a plastoquinone + NADH + (n+1) H(+)(in) = a plastoquinol + NAD(+) + n H(+)(out). It catalyses the reaction a plastoquinone + NADPH + (n+1) H(+)(in) = a plastoquinol + NADP(+) + n H(+)(out). In terms of biological role, NDH-1 shuttles electrons from an unknown electron donor, via FMN and iron-sulfur (Fe-S) centers, to quinones in the respiratory and/or the photosynthetic chain. The immediate electron acceptor for the enzyme in this species is believed to be plastoquinone. Couples the redox reaction to proton translocation, and thus conserves the redox energy in a proton gradient. Cyanobacterial NDH-1 also plays a role in inorganic carbon-concentration. The sequence is that of NAD(P)H-quinone oxidoreductase subunit 3 from Picosynechococcus sp. (strain ATCC 27264 / PCC 7002 / PR-6) (Agmenellum quadruplicatum).